The sequence spans 310 residues: Small ribosomal subunit biogenesis GTPase RsgA (310 aa).

Residues 77-238 enclose the CP-type G domain; sequence LSKQSHILAA…IIDTPGIKGF (162 aa). GTP-binding positions include 126-129 and 180-188; these read NKVD and GHSGVGKST. The Zn(2+) site is built by C262, C267, H269, and C275.

The protein belongs to the TRAFAC class YlqF/YawG GTPase family. RsgA subfamily. As to quaternary structure, monomer. Associates with 30S ribosomal subunit, binds 16S rRNA. Zn(2+) serves as cofactor.

It is found in the cytoplasm. One of several proteins that assist in the late maturation steps of the functional core of the 30S ribosomal subunit. Helps release RbfA from mature subunits. May play a role in the assembly of ribosomal proteins into the subunit. Circularly permuted GTPase that catalyzes slow GTP hydrolysis, GTPase activity is stimulated by the 30S ribosomal subunit. This Bacteroides fragilis (strain YCH46) protein is Small ribosomal subunit biogenesis GTPase RsgA.